The primary structure comprises 225 residues: Uracil-DNA glycosylase (225 aa).

Residue Asp-61 is the Proton acceptor of the active site.

It belongs to the uracil-DNA glycosylase (UDG) superfamily. UNG family.

The protein resides in the cytoplasm. It catalyses the reaction Hydrolyzes single-stranded DNA or mismatched double-stranded DNA and polynucleotides, releasing free uracil.. Excises uracil residues from the DNA which can arise as a result of misincorporation of dUMP residues by DNA polymerase or due to deamination of cytosine. This is Uracil-DNA glycosylase from Actinobacillus pleuropneumoniae serotype 5b (strain L20).